The chain runs to 95 residues: uncharacterized protein (95 aa).

The span at 1–12 shows a compositional bias: low complexity; the sequence is MQNFMNNLSGGS. The disordered stretch occupies residues 1-27; that stretch reads MQNFMNNLSGGSNKEGGEKSNDFLSSA.

This is an uncharacterized protein from Schizosaccharomyces pombe (strain 972 / ATCC 24843) (Fission yeast).